A 251-amino-acid chain; its full sequence is uncharacterized protein (251 aa).

5 helical membrane passes run 22–42, 86–106, 120–140, 157–177, and 205–225; these read FLGV…DIVI, FFLS…VILA, LASS…AGIV, LGYF…IPYV, and IVAW…SFLA.

It localises to the cell membrane. This is an uncharacterized protein from Mycoplasma pneumoniae (strain ATCC 29342 / M129 / Subtype 1) (Mycoplasmoides pneumoniae).